Consider the following 606-residue polypeptide: Chaperone protein DnaK (606 aa).

Residue threonine 174 is modified to Phosphothreonine; by autocatalysis. The interval 578 to 606 (YTQAGPQGGTNPGGQGGTDGNVNTDYKVY) is disordered. Residues 583–596 (PQGGTNPGGQGGTD) are compositionally biased toward gly residues.

This sequence belongs to the heat shock protein 70 family.

Functionally, acts as a chaperone. The protein is Chaperone protein DnaK of Caldicellulosiruptor saccharolyticus (strain ATCC 43494 / DSM 8903 / Tp8T 6331).